Consider the following 174-residue polypeptide: Ubiquitin-fold modifier-conjugating enzyme 1 (174 aa).

The active-site Glycyl thioester intermediate is C119.

Belongs to the ubiquitin-conjugating enzyme family. UFC1 subfamily.

Functionally, E2-like enzyme which forms an intermediate with UFM1 via a thioester linkage. The sequence is that of Ubiquitin-fold modifier-conjugating enzyme 1 from Arabidopsis thaliana (Mouse-ear cress).